The primary structure comprises 421 residues: Uracil permease (421 aa).

12 consecutive transmembrane segments (helical) span residues 18–38 (IPLS…VPML), 41–61 (INPA…IFLC), 65–85 (IPAY…VIST), 89–109 (EAAL…GLLV), 115–135 (GWIE…VIGL), 160–180 (PKVI…NVMF), 186–206 (IIPI…LGIV), 232–252 (IAII…HLIV), 304–324 (VYSI…SFVG), 329–349 (LIQT…FGVI), 371–391 (ILTA…WGNF), and 393–413 (MKGM…FNII).

This sequence belongs to the nucleobase:cation symporter-2 (NCS2) (TC 2.A.40) family.

It localises to the cell membrane. With respect to regulation, inhibited by the proton gradient disruptor carbonyl cyanide m-chlorophenylhydrazone (CCCP), but not by the sodium gradient disruptor ouabain. Both xanthine and uric acid act as competitive inhibitors of uracil transport. Its function is as follows. Specific for the uptake of uracil. Transport is probably proton-dependent. The sequence is that of Uracil permease from Paenibacillus larvae subsp. larvae (strain NRRL B-3650 / LMG 16245).